The sequence spans 404 residues: Formate-dependent phosphoribosylglycinamide formyltransferase (404 aa).

N(1)-(5-phospho-beta-D-ribosyl)glycinamide-binding positions include 25–26 (EL) and E85. ATP contacts are provided by residues R118, K159, 164 to 169 (SSGKGQ), 199 to 202 (EGFI), and E207. The 196-residue stretch at 123-318 (RLAAEELGLP…EFELHARAIL (196 aa)) folds into the ATP-grasp domain. Positions 277 and 289 each coordinate Mg(2+). N(1)-(5-phospho-beta-D-ribosyl)glycinamide-binding positions include D296, K365, and 372 to 373 (RR).

This sequence belongs to the PurK/PurT family. As to quaternary structure, homodimer.

It carries out the reaction N(1)-(5-phospho-beta-D-ribosyl)glycinamide + formate + ATP = N(2)-formyl-N(1)-(5-phospho-beta-D-ribosyl)glycinamide + ADP + phosphate + H(+). Its pathway is purine metabolism; IMP biosynthesis via de novo pathway; N(2)-formyl-N(1)-(5-phospho-D-ribosyl)glycinamide from N(1)-(5-phospho-D-ribosyl)glycinamide (formate route): step 1/1. In terms of biological role, involved in the de novo purine biosynthesis. Catalyzes the transfer of formate to 5-phospho-ribosyl-glycinamide (GAR), producing 5-phospho-ribosyl-N-formylglycinamide (FGAR). Formate is provided by PurU via hydrolysis of 10-formyl-tetrahydrofolate. The protein is Formate-dependent phosphoribosylglycinamide formyltransferase of Burkholderia pseudomallei (strain 668).